The primary structure comprises 125 residues: Ribonuclease pancreatic (125 aa).

Positions 7 and 10 each coordinate substrate. H12 serves as the catalytic Proton acceptor. 4 disulfide bridges follow: C27-C85, C41-C96, C59-C111, and C66-C73. Residue N35 is glycosylated (N-linked (GlcNAc...) asparagine). Substrate-binding positions include 42–46 (KPVNT), K67, and R86. The active-site Proton donor is H120.

Belongs to the pancreatic ribonuclease family. As to quaternary structure, monomer. Interacts with and forms tight 1:1 complexes with RNH1. Dimerization of two such complexes may occur. Interaction with RNH1 inhibits this protein. Pancreas.

It localises to the secreted. It catalyses the reaction an [RNA] containing cytidine + H2O = an [RNA]-3'-cytidine-3'-phosphate + a 5'-hydroxy-ribonucleotide-3'-[RNA].. The catalysed reaction is an [RNA] containing uridine + H2O = an [RNA]-3'-uridine-3'-phosphate + a 5'-hydroxy-ribonucleotide-3'-[RNA].. Endonuclease that catalyzes the cleavage of RNA on the 3' side of pyrimidine nucleotides. Acts on single-stranded and double-stranded RNA. This is Ribonuclease pancreatic (RNASE1) from Spalax ehrenbergi (Middle East blind mole rat).